The sequence spans 108 residues: MAAPCLLRQGRAGALKTMLQEAQVFRGLASTVSLSAESGKSEKGQPQNSKKQSPPKKPAPVPAEPFDNTTYKNLQHHDYSTYTFLDLNLELSKFRMPQPSSGRESPRH.

A mitochondrion-targeting transit peptide spans Met-1–Leu-34. The interval Ser-33–Lys-72 is disordered. Ser-105 carries the post-translational modification Phosphoserine.

This sequence belongs to the complex I NDUFV3 subunit family. Complex I is composed of 45 different subunits. This is a component of the flavoprotein-sulfur (FP) fragment of the enzyme.

It localises to the mitochondrion inner membrane. Functionally, accessory subunit of the mitochondrial membrane respiratory chain NADH dehydrogenase (Complex I), that is believed not to be involved in catalysis. Complex I functions in the transfer of electrons from NADH to the respiratory chain. The immediate electron acceptor for the enzyme is believed to be ubiquinone. May be the terminally assembled subunit of Complex I. This is NADH dehydrogenase [ubiquinone] flavoprotein 3, mitochondrial (NDUFV3) from Homo sapiens (Human).